The following is a 718-amino-acid chain: Auxin response factor 2 (718 aa).

Residues 1-24 (MVGIDLNTVEEEEDEEEGGATGTV) form a disordered region. A compositionally biased stretch (acidic residues) spans 8-18 (TVEEEEDEEEG). A DNA-binding region (TF-B3) is located at residues 147–249 (FCKTLTASDT…ELRLGVRRAA (103 aa)).

Belongs to the ARF family. Homo and heterodimers. In terms of tissue distribution, expressed in roots, culms, leaves and young panicles.

It is found in the nucleus. Auxin response factors (ARFs) are transcriptional factors that bind specifically to the DNA sequence 5'-TGTCTC-3' found in the auxin-responsive promoter elements (AuxREs). This is Auxin response factor 2 (ARF2) from Oryza sativa subsp. japonica (Rice).